A 347-amino-acid chain; its full sequence is 4-hydroxy-2-oxovalerate aldolase (347 aa).

The Pyruvate carboxyltransferase domain maps to 2–252; that stretch reads ILISDATLRD…DTRTTFERVM (251 aa). Position 10-11 (10-11) interacts with substrate; that stretch reads RD. Aspartate 11 lines the Mn(2+) pocket. Catalysis depends on histidine 14, which acts as the Proton acceptor. Residues serine 164 and histidine 191 each contribute to the substrate site. Mn(2+) contacts are provided by histidine 191 and histidine 193.

The protein belongs to the 4-hydroxy-2-oxovalerate aldolase family.

It carries out the reaction (S)-4-hydroxy-2-oxopentanoate = acetaldehyde + pyruvate. This chain is 4-hydroxy-2-oxovalerate aldolase (mhpE), found in Burkholderia pseudomallei (strain K96243).